Here is a 543-residue protein sequence, read N- to C-terminus: CTP synthase (543 aa).

An amidoligase domain region spans residues 1-265; the sequence is MARYIFITGG…DDEVLAAFAI (265 aa). S13 lines the CTP pocket. S13 contacts UTP. Residue 14-19 coordinates ATP; the sequence is SLGKGL. Residue Y54 participates in L-glutamine binding. An ATP-binding site is contributed by D71. 2 residues coordinate Mg(2+): D71 and E139. Residues 146 to 148, 186 to 191, and K222 each bind CTP; these read DIE and KTKPTQ. UTP contacts are provided by residues 186–191 and K222; that span reads KTKPTQ. Residue 238 to 240 participates in ATP binding; that stretch reads RDA. Positions 291–542 constitute a Glutamine amidotransferase type-1 domain; sequence TIAIVGKYTG…IEAALVRSRL (252 aa). L-glutamine is bound at residue G353. C380 (nucleophile; for glutamine hydrolysis) is an active-site residue. L-glutamine is bound by residues 381-384, E404, and R470; that span reads FGMQ. Active-site residues include H515 and E517.

Belongs to the CTP synthase family. Homotetramer.

It catalyses the reaction UTP + L-glutamine + ATP + H2O = CTP + L-glutamate + ADP + phosphate + 2 H(+). The catalysed reaction is L-glutamine + H2O = L-glutamate + NH4(+). It carries out the reaction UTP + NH4(+) + ATP = CTP + ADP + phosphate + 2 H(+). The protein operates within pyrimidine metabolism; CTP biosynthesis via de novo pathway; CTP from UDP: step 2/2. Its activity is regulated as follows. Allosterically activated by GTP, when glutamine is the substrate; GTP has no effect on the reaction when ammonia is the substrate. The allosteric effector GTP functions by stabilizing the protein conformation that binds the tetrahedral intermediate(s) formed during glutamine hydrolysis. Inhibited by the product CTP, via allosteric rather than competitive inhibition. In terms of biological role, catalyzes the ATP-dependent amination of UTP to CTP with either L-glutamine or ammonia as the source of nitrogen. Regulates intracellular CTP levels through interactions with the four ribonucleotide triphosphates. This Rhodopseudomonas palustris (strain BisB5) protein is CTP synthase.